The sequence spans 163 residues: ATP synthase subunit b 1 (163 aa).

Residues 7-27 (PETWVAIAFVILMGLFAYLGV) form a helical membrane-spanning segment.

The protein belongs to the ATPase B chain family. F-type ATPases have 2 components, F(1) - the catalytic core - and F(0) - the membrane proton channel. F(1) has five subunits: alpha(3), beta(3), gamma(1), delta(1), epsilon(1). F(0) has three main subunits: a(1), b(2) and c(10-14). The alpha and beta chains form an alternating ring which encloses part of the gamma chain. F(1) is attached to F(0) by a central stalk formed by the gamma and epsilon chains, while a peripheral stalk is formed by the delta and b chains.

It localises to the cell inner membrane. Its function is as follows. F(1)F(0) ATP synthase produces ATP from ADP in the presence of a proton or sodium gradient. F-type ATPases consist of two structural domains, F(1) containing the extramembraneous catalytic core and F(0) containing the membrane proton channel, linked together by a central stalk and a peripheral stalk. During catalysis, ATP synthesis in the catalytic domain of F(1) is coupled via a rotary mechanism of the central stalk subunits to proton translocation. Functionally, component of the F(0) channel, it forms part of the peripheral stalk, linking F(1) to F(0). This Bradyrhizobium sp. (strain BTAi1 / ATCC BAA-1182) protein is ATP synthase subunit b 1.